A 426-amino-acid polypeptide reads, in one-letter code: MFVDEVEIKVKGGQGGNGVVSFRREKFEPMGGPDGGDGGDGGNVILRVDEGLNTLADFRYQRHYEAERGYHGSGKNKHGRSGEDLVLKVPPGTVVYDADTDELLADLTEDGEEYIVAHGGKGGRGNARFKKSTRKAPRFAEKGEPGEERSIRLELKLVADVGLIGFPNVGKSTLISVVSEARPKIANYHFTTLKPNLGVVALSEYKSFVMADIPGLIEGAHQGVGLGDEFLRHIERTRLLIHIIDISGIEGRDPLEDFKTINRELEKFNEKLSSRPQIVALNKIDLPGARENVERVQPVLEEKGYKVFPISAATKEGVKELIYYTGDLLKELPVERKIAKEDRIVIKPDFADEEENIVVEKKNGIYEVSGRLVEKYVIKTDFNNDAAVKRLLRVLQHHDLNELLRDKGVKNGDTVKIGPMEFEYME.

An Obg domain is found at 1 to 158; that stretch reads MFVDEVEIKV…RSIRLELKLV (158 aa). The OBG-type G domain occupies 159–330; it reads ADVGLIGFPN…LIYYTGDLLK (172 aa). GTP is bound by residues 165 to 172, 190 to 194, 212 to 215, 282 to 285, and 311 to 313; these read GFPNVGKS, FTTLK, DIPG, NKID, and SAA. Residues Ser-172 and Thr-192 each coordinate Mg(2+). An OCT domain is found at 349-426; sequence DFADEEENIV…IGPMEFEYME (78 aa).

It belongs to the TRAFAC class OBG-HflX-like GTPase superfamily. OBG GTPase family. Monomer. It depends on Mg(2+) as a cofactor.

It is found in the cytoplasm. An essential GTPase which binds GTP, GDP and possibly (p)ppGpp with moderate affinity, with high nucleotide exchange rates and a fairly low GTP hydrolysis rate. Plays a role in control of the cell cycle, stress response, ribosome biogenesis and in those bacteria that undergo differentiation, in morphogenesis control. This chain is GTPase Obg, found in Halothermothrix orenii (strain H 168 / OCM 544 / DSM 9562).